The primary structure comprises 321 residues: Protein ABIL3 (321 aa).

2 disordered regions span residues 179–273 and 279–298; these read TIRE…RSAS and EKEA…SKRL. 2 stretches are compositionally biased toward low complexity: residues 204-215 and 240-255; these read SATFSFSSIATA and IRPS…SKSR. Positions 279 to 288 are enriched in basic and acidic residues; that stretch reads EKEAQKEPEH.

This sequence belongs to the ABI family. In terms of assembly, binds SCAR.

The protein resides in the cytoplasm. Its subcellular location is the cytoskeleton. Functionally, involved in regulation of actin and microtubule organization. Part of a WAVE complex that activates the Arp2/3 complex. The sequence is that of Protein ABIL3 (ABIL3) from Arabidopsis thaliana (Mouse-ear cress).